The primary structure comprises 304 residues: PTB domain-containing engulfment adapter protein 1 (304 aa).

Threonine 16 is subject to Phosphothreonine. Residues 21–176 (SKHFIPYNAK…AGLQKRIQDL (156 aa)) form the PID domain. Residues 158–202 (KDVETRKQIAGLQKRIQDLETENMELKNKVQDLENQLRITQVSAP) are a coiled coil. At serine 223 the chain carries Phosphoserine. Residues 223-246 (SPISHQSSMPTRNGTQPPPVPSRS) form a disordered region. The span at 225-237 (ISHQSSMPTRNGT) shows a compositional bias: polar residues.

It belongs to the ced-6 family. As to quaternary structure, homodimer. Interacts with clathrin. Interacts with GDP-bound ARF6, but not with GTP-bound ARF6. Part of a complex composed of GULP1, ACAP1 and ARF6. Interacts with ACAP1, LRP1, MEGF10 and STAB2. In terms of tissue distribution, widely expressed. Detected in macrophages, pancreas, kidney, skeletal muscle, heart, colon, intestine, lung, placenta and ovary.

It localises to the cytoplasm. May function as an adapter protein. Required for efficient phagocytosis of apoptotic cells. Modulates cellular glycosphingolipid and cholesterol transport. May play a role in the internalization and endosomal trafficking of various LRP1 ligands, such as PSAP. Increases cellular levels of GTP-bound ARF6. The sequence is that of PTB domain-containing engulfment adapter protein 1 (GULP1) from Homo sapiens (Human).